The chain runs to 244 residues: 2-C-methyl-D-erythritol 4-phosphate cytidylyltransferase (244 aa).

This sequence belongs to the IspD/TarI cytidylyltransferase family. IspD subfamily.

It carries out the reaction 2-C-methyl-D-erythritol 4-phosphate + CTP + H(+) = 4-CDP-2-C-methyl-D-erythritol + diphosphate. The protein operates within isoprenoid biosynthesis; isopentenyl diphosphate biosynthesis via DXP pathway; isopentenyl diphosphate from 1-deoxy-D-xylulose 5-phosphate: step 2/6. Functionally, catalyzes the formation of 4-diphosphocytidyl-2-C-methyl-D-erythritol from CTP and 2-C-methyl-D-erythritol 4-phosphate (MEP). This Corynebacterium diphtheriae (strain ATCC 700971 / NCTC 13129 / Biotype gravis) protein is 2-C-methyl-D-erythritol 4-phosphate cytidylyltransferase.